The primary structure comprises 167 residues: NADH-quinone oxidoreductase subunit I 1 (167 aa).

2 4Fe-4S ferredoxin-type domains span residues 58–88 (LRRYPNGEERCIACKLCEAVCPAQAITIDAE) and 98–127 (TRYDIDMTKCIYCGFCQEACPVDAIVEGPN). 8 residues coordinate [4Fe-4S] cluster: C68, C71, C74, C78, C107, C110, C113, and C117.

The protein belongs to the complex I 23 kDa subunit family. In terms of assembly, NDH-1 is composed of 14 different subunits. Subunits NuoA, H, J, K, L, M, N constitute the membrane sector of the complex. It depends on [4Fe-4S] cluster as a cofactor.

It localises to the cell inner membrane. The catalysed reaction is a quinone + NADH + 5 H(+)(in) = a quinol + NAD(+) + 4 H(+)(out). Its function is as follows. NDH-1 shuttles electrons from NADH, via FMN and iron-sulfur (Fe-S) centers, to quinones in the respiratory chain. The immediate electron acceptor for the enzyme in this species is believed to be ubiquinone. Couples the redox reaction to proton translocation (for every two electrons transferred, four hydrogen ions are translocated across the cytoplasmic membrane), and thus conserves the redox energy in a proton gradient. This Cereibacter sphaeroides (strain ATCC 17029 / ATH 2.4.9) (Rhodobacter sphaeroides) protein is NADH-quinone oxidoreductase subunit I 1.